The sequence spans 562 residues: MDWKEAIPGAAKVAIETKDYITYSTLLELILEEARIKDIDEQRELIKCLHEELKQEKNDHITREISWDIIGMVLPYVGKVQNEADEFVDFLAKNGNPREVFLKCCELLINGGFESPQQFISLNSAILSALHRISTKRPVLFVNNFLISLFSGLANILQIDSDELYCVWKISISSIQDAMHRFPVSECYLACLKACSILAQLFLSKETLMLSFRSLLQTKDQYAEFREELSGATTNCDKLDTLSKSIINIFDYLLSHLPESWSIITEHMAQELTKATYVSQSSSISSEDEEIAKNADVPAEVDNNSTKADDKRDEIEFDTKGCLALLTIKSFYQSGNFFLDFLKEKFPSTILETLQQLVSWEIQLDSVGFKDIAVYQGYLLDLPHFQVPDSELEHLSSLLHGYHFMASSTELPWLRVTCNAIVTKCLDSQLPSVRLSYILDTLEECPLLNIKTAILNYYQKQCSLVKDSNEEGLKNFVSPNTLLDVFKVFDAMEDVELDSQSLSYIHQTLVFLYSLEIQNLLSQNQFPTVYFTKISDQINNYEGELPTDGLKYYIELLNSRNK.

Phosphoserine occurs at positions 285 and 286. A disordered region spans residues aspartate 288 to alanine 308.

It belongs to the UPF0649 family.

Its subcellular location is the cytoplasm. The protein resides in the nucleus. The chain is UPF0649 protein C1442.02 from Schizosaccharomyces pombe (strain 972 / ATCC 24843) (Fission yeast).